A 538-amino-acid polypeptide reads, in one-letter code: MFRRNIITSAILLMAPLAFSAQSLAESLTVEQRLELLEKALRETQSELKKYKDEEKKKYTPATVNRSVSTNDQGYAANPFPTSRAAKPDAVLVKNEEKNASETGSIYSSMTLKDFSKFVKDEIGFSYNGYYRSGWGTASHGSPKSWAIGSLGRFGNEYSGWFDLQLKQRVYNENGKRVDAIVMMDGNVGQQYSTGWFGDNAGGENFMQFSDMYVTTKGFLPFAPEADFWVGKHGAPKIEIQMLDWKTQRTDAAAGVGLENWKVGPGKIDIALVREDVDDYDRSLQNKQQINTNTIDLRYKDIPLWDKVTLMVSGRYVTANESASEKDNQDNNGYYDWKDTWMFGTSLTQKFDKGGFNEFSFLVANNSIASNFGRYAGASPFTTFNGRYYGYHTGGTAVRLTSQGEAYIGDHFIVANAIVYSFGNDIYSYETGAHSDFESIRAVVRPAYIWDQYNQTGVELGYFTQQNKDANSNKFNESGYKTTLFHTFKVNTSMLTSRPEIRFYATYIKALENELDGFTFEDNKDDQFAVGAQAEIWW.

An N-terminal signal peptide occupies residues 1 to 25 (MFRRNIITSAILLMAPLAFSAQSLA).

This sequence belongs to the porin LamB (TC 1.B.3) family.

The protein localises to the cell outer membrane. Its function is as follows. May be a sugar porin with a broad carbohydrate specificity. This is Putative outer membrane porin BglH (bglH) from Escherichia coli (strain UTI89 / UPEC).